A 202-amino-acid chain; its full sequence is Glycerol-3-phosphate acyltransferase (202 aa).

A run of 6 helical transmembrane segments spans residues 3 to 23 (NLII…LILA), 61 to 81 (IATI…LKFL), 87 to 107 (LLWS…YLLF), 118 to 138 (GAMI…WVVI), 144 to 164 (ISSL…FIFN), and 167 to 187 (LEIH…YKHL).

It belongs to the PlsY family. Probably interacts with PlsX.

Its subcellular location is the cell inner membrane. It carries out the reaction an acyl phosphate + sn-glycerol 3-phosphate = a 1-acyl-sn-glycero-3-phosphate + phosphate. It participates in lipid metabolism; phospholipid metabolism. Functionally, catalyzes the transfer of an acyl group from acyl-phosphate (acyl-PO(4)) to glycerol-3-phosphate (G3P) to form lysophosphatidic acid (LPA). This enzyme utilizes acyl-phosphate as fatty acyl donor, but not acyl-CoA or acyl-ACP. This is Glycerol-3-phosphate acyltransferase from Campylobacter jejuni subsp. jejuni serotype O:6 (strain 81116 / NCTC 11828).